The following is a 421-amino-acid chain: 3-phosphoshikimate 1-carboxyvinyltransferase (421 aa).

3-phosphoshikimate contacts are provided by K20, S21, and R25. Phosphoenolpyruvate is bound at residue K20. G90 and R117 together coordinate phosphoenolpyruvate. S162, S163, Q164, S190, D304, and K331 together coordinate 3-phosphoshikimate. Q164 provides a ligand contact to phosphoenolpyruvate. The active-site Proton acceptor is D304. The phosphoenolpyruvate site is built by R335 and R376.

Belongs to the EPSP synthase family. As to quaternary structure, monomer.

It is found in the cytoplasm. The enzyme catalyses 3-phosphoshikimate + phosphoenolpyruvate = 5-O-(1-carboxyvinyl)-3-phosphoshikimate + phosphate. It participates in metabolic intermediate biosynthesis; chorismate biosynthesis. Functionally, catalyzes the transfer of the enolpyruvyl moiety of phosphoenolpyruvate (PEP) to the 5-hydroxyl of shikimate-3-phosphate (S3P) to produce enolpyruvyl shikimate-3-phosphate and inorganic phosphate. This Methanothrix thermoacetophila (strain DSM 6194 / JCM 14653 / NBRC 101360 / PT) (Methanosaeta thermophila) protein is 3-phosphoshikimate 1-carboxyvinyltransferase.